Consider the following 435-residue polypeptide: Gamma-glutamyl phosphate reductase (435 aa).

It belongs to the gamma-glutamyl phosphate reductase family.

Its subcellular location is the cytoplasm. The enzyme catalyses L-glutamate 5-semialdehyde + phosphate + NADP(+) = L-glutamyl 5-phosphate + NADPH + H(+). It functions in the pathway amino-acid biosynthesis; L-proline biosynthesis; L-glutamate 5-semialdehyde from L-glutamate: step 2/2. In terms of biological role, catalyzes the NADPH-dependent reduction of L-glutamate 5-phosphate into L-glutamate 5-semialdehyde and phosphate. The product spontaneously undergoes cyclization to form 1-pyrroline-5-carboxylate. The polypeptide is Gamma-glutamyl phosphate reductase (Xylella fastidiosa (strain M12)).